The chain runs to 382 residues: ATP phosphoribosyltransferase regulatory subunit (382 aa).

Belongs to the class-II aminoacyl-tRNA synthetase family. HisZ subfamily. Heteromultimer composed of HisG and HisZ subunits.

Its subcellular location is the cytoplasm. It functions in the pathway amino-acid biosynthesis; L-histidine biosynthesis; L-histidine from 5-phospho-alpha-D-ribose 1-diphosphate: step 1/9. Functionally, required for the first step of histidine biosynthesis. May allow the feedback regulation of ATP phosphoribosyltransferase activity by histidine. This is ATP phosphoribosyltransferase regulatory subunit from Burkholderia multivorans (strain ATCC 17616 / 249).